A 926-amino-acid polypeptide reads, in one-letter code: Nitrate reductase [NADH] (926 aa).

The disordered stretch occupies residues 1-85; sequence MAASVDRQYH…SDSEEDDDEN (85 aa). Positions 36 to 46 are enriched in polar residues; sequence YTFSNPPSSNG. Residues 58 to 73 are compositionally biased toward low complexity; sequence DNNSNSNNGSNNNNNR. Cys-204 contributes to the Mo-molybdopterin binding site. The Cytochrome b5 heme-binding domain maps to 551–626; the sequence is SKMYSMSEVK…LEDFRIGELI (76 aa). Residues His-586 and His-609 each contribute to the heme site. Residues 670–782 form the FAD-binding FR-type domain; sequence RVKIPCKLIE…KGPLGHIEYL (113 aa). Residues 722–725, 739–743, Phe-744, Phe-751, 756–758, and Thr-809 each bind FAD; these read RAYT, VVKVY, and VMS.

Belongs to the nitrate reductase family. Homodimer. The cofactor is FAD. It depends on heme as a cofactor. Mo-molybdopterin is required as a cofactor.

The enzyme catalyses nitrite + NAD(+) + H2O = nitrate + NADH + H(+). Its function is as follows. Nitrate reductase is a key enzyme involved in the first step of nitrate assimilation in plants, fungi and bacteria. In Spinacia oleracea (Spinach), this protein is Nitrate reductase [NADH] (NIA).